Consider the following 39-residue polypeptide: Natriuretic peptide NsNP-b (39 aa).

Positions 1-8 are excised as a propeptide; that stretch reads SGSKTAKI. A disulfide bridge connects residues Cys12 and Cys28. The disordered stretch occupies residues 19–39; that stretch reads RIGSTSGMGCGSVPKPTPGGS.

The protein belongs to the natriuretic peptide family. In terms of tissue distribution, expressed by the venom gland.

It is found in the secreted. Functionally, snake venom natriuretic peptide that targets both NPR1 and NPR2. Exhibits hypotensive and vasodepressor activities. The sequence is that of Natriuretic peptide NsNP-b from Notechis scutatus scutatus (Mainland tiger snake).